We begin with the raw amino-acid sequence, 376 residues long: Chorismate synthase (376 aa).

Residues R39 and R45 each coordinate NADP(+). FMN is bound by residues 115–117 (RSS), G276, 291–295 (KPIPT), and R317.

The protein belongs to the chorismate synthase family. As to quaternary structure, homotetramer. Requires FMNH2 as cofactor.

The enzyme catalyses 5-O-(1-carboxyvinyl)-3-phosphoshikimate = chorismate + phosphate. It functions in the pathway metabolic intermediate biosynthesis; chorismate biosynthesis; chorismate from D-erythrose 4-phosphate and phosphoenolpyruvate: step 7/7. Catalyzes the anti-1,4-elimination of the C-3 phosphate and the C-6 proR hydrogen from 5-enolpyruvylshikimate-3-phosphate (EPSP) to yield chorismate, which is the branch point compound that serves as the starting substrate for the three terminal pathways of aromatic amino acid biosynthesis. This reaction introduces a second double bond into the aromatic ring system. The protein is Chorismate synthase of Thermotoga sp. (strain RQ2).